The chain runs to 120 residues: Seripauperin-13 (120 aa).

Residues 1–25 (MVKLTSIAAGVAAIAATASATTTLA) form the signal peptide.

It belongs to the SRP1/TIP1 family. Seripauperin subfamily.

In Saccharomyces cerevisiae (strain ATCC 204508 / S288c) (Baker's yeast), this protein is Seripauperin-13 (PAU13).